Here is a 539-residue protein sequence, read N- to C-terminus: Polyol transporter 5 (539 aa).

The span at 1-11 (MTGATPENRTA) shows a compositional bias: polar residues. The tract at residues 1–24 (MTGATPENRTAPSPPPVKHVPESV) is disordered. Helical transmembrane passes span 37–57 (FACA…IGVM), 73–93 (LQIG…SCAA), 104–124 (YTIV…GLSP), 127–147 (AFLM…LMIA), 165–185 (SFPE…NLAF), 196–216 (LMLG…LAMP), 296–316 (IAAI…VVLF), 333–353 (LLAT…ATFL), 364–384 (LTSV…LTII), 391–411 (VMWA…TFSI), 433–453 (GSSM…ISFL), and 463–483 (GAFY…YTFL). Composition is skewed to basic and acidic residues over residues 503 to 514 (WRDSKSKPKGNP) and 530 to 539 (QWKEGDTQSS). The tract at residues 503-539 (WRDSKSKPKGNPEKTVPNPEVEIGSNKQWKEGDTQSS) is disordered.

It belongs to the major facilitator superfamily. Sugar transporter (TC 2.A.1.1) family. In terms of tissue distribution, highly expressed in roots. Expressed in vascular tissue of leaves, sepals and siliques.

The protein resides in the cell membrane. Plasma membrane broad-spectrum sugar-proton symporter. Mediates the uptake of linear polyols such as sorbitol, xylitol, erythritol or glycerol. Can transport the cyclic polyol myo-inositol and different hexoses, pentoses (including ribose), tetroses and sugar alcohols. The protein is Polyol transporter 5 (PLT5) of Arabidopsis thaliana (Mouse-ear cress).